A 153-amino-acid chain; its full sequence is uncharacterized protein (153 aa).

The signal sequence occupies residues 1-18; that stretch reads MSARISKQLRLSVPPCLA. N-linked (GlcNAc...) asparagine glycans are attached at residues N19 and N25. The Extracellular portion of the chain corresponds to 19 to 43; the sequence is NRTTASNSSSCVTEVEPLLQSFSST. The helical transmembrane segment at 44–64 threads the bilayer; that stretch reads LVLIVLATVIFCLVVLSLSTF. Residues 65 to 153 lie on the Cytoplasmic side of the membrane; that stretch reads HMHKSKMKKR…EHLQQSVVLS (89 aa). The disordered stretch occupies residues 75 to 115; sequence KIEKAQEEYERDHCSPKAERGHLHGMGRGGTHGSPTSPTIQ. The span at 77–96 shows a compositional bias: basic and acidic residues; the sequence is EKAQEEYERDHCSPKAERGH.

Its subcellular location is the membrane. This is an uncharacterized protein from Xenopus tropicalis (Western clawed frog).